We begin with the raw amino-acid sequence, 694 residues long: DNA polymerase eta (694 aa).

One can recognise a UmuC domain in the interval 9-258 (VALVDMDCFF…MPIRKIRSLG (250 aa)). The Mg(2+) site is built by Asp-13 and Met-14. Mn(2+) contacts are provided by Asp-13 and Met-14. Arg-61 provides a ligand contact to a 2'-deoxyribonucleoside 5'-triphosphate. 2 residues coordinate Mg(2+): Asp-115 and Glu-116. Positions 115 and 116 each coordinate Mn(2+). Glu-116 is a catalytic residue. A disordered region spans residues 565 to 598 (DSGPDDGAVKPVSSKAVSTEMNVAGDSPNVLDSP). The UBZ3-type zinc-finger motif lies at 609–643 (ATEDQVLCEKCDSLVPVWDMPEHTDYHFALELQKS). Residues Cys-616, Cys-619, His-631, and His-635 each coordinate Zn(2+). The disordered stretch occupies residues 651 to 694 (KPQAIPAVSPQGKRNPKSPSASSSKRLRPHGMQTLESFFKPLTH). Residues Lys-663, Lys-667, and Lys-675 each participate in a glycyl lysine isopeptide (Lys-Gly) (interchain with G-Cter in ubiquitin) cross-link. The PIP-box motif lies at 682–689 (MQTLESFF). Lys-690 participates in a covalent cross-link: Glycyl lysine isopeptide (Lys-Gly) (interchain with G-Cter in ubiquitin).

It belongs to the DNA polymerase type-Y family. In terms of assembly, interacts with REV1. Interacts with monoubiquitinated PCNA, but not unmodified PCNA. Interacts with POLI; this interaction targets POLI to the replication machinery. Interacts with PALB2 and BRCA2; the interactions are direct and are required to sustain the recruitment of POLH at blocked replication forks and to stimulate POLH-dependent DNA synthesis on D loop substrates. Interacts (via C-terminus) with TRAIP. Interacts with ubiquitin. Interacts with POLDIP2. Mg(2+) is required as a cofactor. Requires Mn(2+) as cofactor. Post-translationally, monoubiquitinated by RCHY1/PIRH2. Ubiquitination depends on integrity of the UBZ3-type zinc finger domain and is enhanced by TRAIP. Ubiquitination inhibits the ability of PolH to interact with PCNA and to bypass UV-induced lesions. Ubiquitous.

The protein localises to the nucleus. The catalysed reaction is DNA(n) + a 2'-deoxyribonucleoside 5'-triphosphate = DNA(n+1) + diphosphate. With respect to regulation, the enzyme in complex with the DNA substrate binds a third divalent metal cation. The binding of this third divalent cation, which is coordinated by water molecules and two oxygen atoms from DNA and dNTP, is essential for catalyzing the DNA synthesis. DNA polymerase specifically involved in the DNA repair by translesion synthesis (TLS). Due to low processivity on both damaged and normal DNA, cooperates with the heterotetrameric (REV3L, REV7, POLD2 and POLD3) POLZ complex for complete bypass of DNA lesions. Inserts one or 2 nucleotide(s) opposite the lesion, the primer is further extended by the tetrameric POLZ complex. In the case of 1,2-intrastrand d(GpG)-cisplatin cross-link, inserts dCTP opposite the 3' guanine. Particularly important for the repair of UV-induced pyrimidine dimers. Although inserts the correct base, may cause base transitions and transversions depending upon the context. May play a role in hypermutation at immunoglobulin genes. Forms a Schiff base with 5'-deoxyribose phosphate at abasic sites, but does not have any lyase activity, preventing the release of the 5'-deoxyribose phosphate (5'-dRP) residue. This covalent trapping of the enzyme by the 5'-dRP residue inhibits its DNA synthetic activity during base excision repair, thereby avoiding high incidence of mutagenesis. Targets POLI to replication foci. The sequence is that of DNA polymerase eta (Polh) from Mus musculus (Mouse).